The sequence spans 320 residues: tRNA U34 carboxymethyltransferase (320 aa).

Residues Lys-89, Trp-103, Lys-108, Gly-128, 150–152 (DPT), 179–180 (IE), Met-194, Tyr-198, and Arg-313 contribute to the carboxy-S-adenosyl-L-methionine site.

The protein belongs to the class I-like SAM-binding methyltransferase superfamily. CmoB family. Homotetramer.

The catalysed reaction is carboxy-S-adenosyl-L-methionine + 5-hydroxyuridine(34) in tRNA = 5-carboxymethoxyuridine(34) in tRNA + S-adenosyl-L-homocysteine + H(+). Its function is as follows. Catalyzes carboxymethyl transfer from carboxy-S-adenosyl-L-methionine (Cx-SAM) to 5-hydroxyuridine (ho5U) to form 5-carboxymethoxyuridine (cmo5U) at position 34 in tRNAs. The protein is tRNA U34 carboxymethyltransferase of Actinobacillus pleuropneumoniae serotype 7 (strain AP76).